Reading from the N-terminus, the 269-residue chain is 2-keto-4-pentenoate hydratase (269 aa).

It belongs to the hydratase/decarboxylase family. MhpD subfamily. A divalent metal cation serves as cofactor.

It catalyses the reaction (S)-4-hydroxy-2-oxopentanoate = (2Z)-2-hydroxypenta-2,4-dienoate + H2O. Its pathway is aromatic compound metabolism; 3-phenylpropanoate degradation. Functionally, catalyzes the conversion of 2-hydroxypentadienoic acid (enolic form of 2-oxopent-4-enoate) to 4-hydroxy-2-ketopentanoic acid. The protein is 2-keto-4-pentenoate hydratase of Paraburkholderia xenovorans (strain LB400).